A 313-amino-acid chain; its full sequence is Homoserine kinase (313 aa).

92–102 (PPGRGLGSSGA) is a binding site for ATP.

It belongs to the GHMP kinase family. Homoserine kinase subfamily.

It is found in the cytoplasm. The enzyme catalyses L-homoserine + ATP = O-phospho-L-homoserine + ADP + H(+). It participates in amino-acid biosynthesis; L-threonine biosynthesis; L-threonine from L-aspartate: step 4/5. In terms of biological role, catalyzes the ATP-dependent phosphorylation of L-homoserine to L-homoserine phosphate. In Aeropyrum pernix (strain ATCC 700893 / DSM 11879 / JCM 9820 / NBRC 100138 / K1), this protein is Homoserine kinase.